The chain runs to 545 residues: Lysine--tRNA ligase (545 aa).

Positions 42-50 (PSGVPHIGH) match the 'HIGH' region motif. Residues 307–311 (PLSSS) carry the 'KMSKS' region motif.

It belongs to the class-I aminoacyl-tRNA synthetase family.

It localises to the cytoplasm. It carries out the reaction tRNA(Lys) + L-lysine + ATP = L-lysyl-tRNA(Lys) + AMP + diphosphate. This Haloarcula marismortui (strain ATCC 43049 / DSM 3752 / JCM 8966 / VKM B-1809) (Halobacterium marismortui) protein is Lysine--tRNA ligase.